The following is a 235-amino-acid chain: uncharacterized protein (235 aa).

Belongs to the UreF family.

Its subcellular location is the cytoplasm. It is found in the nucleus. In terms of biological role, probably facilitates nickel incorporation. This is an uncharacterized protein from Schizosaccharomyces pombe (strain 972 / ATCC 24843) (Fission yeast).